The chain runs to 917 residues: Catenin alpha (917 aa).

Residues T643 and T645 each carry the phosphothreonine modification. S659 and S662 each carry phosphoserine. Over residues 878–890 (PLVRPEKPEEVRA) the composition is skewed to basic and acidic residues. A disordered region spans residues 878-905 (PLVRPEKPEEVRAKVRKGSQKKVQNPIH).

Belongs to the vinculin/alpha-catenin family. As to quaternary structure, interacts with arm/armadillo protein. In terms of processing, rapidly phosphorylated by CK2 and more slowly by CK1.

The protein localises to the cytoplasm. It is found in the cytoskeleton. The protein resides in the cell junction. It localises to the adherens junction. Its subcellular location is the cell membrane. Its function is as follows. Associates with the cytoplasmic domain of a variety of cadherins. The association of catenins to cadherins produces a complex which is linked to the actin filament network, and which seems to be of primary importance for cadherins cell-adhesion properties. In Drosophila melanogaster (Fruit fly), this protein is Catenin alpha.